A 197-amino-acid chain; its full sequence is Large ribosomal subunit protein uL18 (197 aa).

Belongs to the universal ribosomal protein uL18 family. In terms of assembly, part of the 50S ribosomal subunit. Contacts the 5S and 23S rRNAs.

In terms of biological role, this is one of the proteins that bind and probably mediate the attachment of the 5S RNA into the large ribosomal subunit, where it forms part of the central protuberance. In Sulfolobus acidocaldarius (strain ATCC 33909 / DSM 639 / JCM 8929 / NBRC 15157 / NCIMB 11770), this protein is Large ribosomal subunit protein uL18.